The chain runs to 128 residues: Small ribosomal subunit protein uS9 (128 aa).

Residues 106 to 128 are disordered; that stretch reads PRVVERKKPGRPKARKRFQFSKR. Residues 113-128 show a composition bias toward basic residues; it reads KPGRPKARKRFQFSKR.

This sequence belongs to the universal ribosomal protein uS9 family.

The chain is Small ribosomal subunit protein uS9 from Porphyromonas gingivalis (strain ATCC 33277 / DSM 20709 / CIP 103683 / JCM 12257 / NCTC 11834 / 2561).